A 284-amino-acid polypeptide reads, in one-letter code: Acetyl-coenzyme A carboxylase carboxyl transferase subunit beta (284 aa).

Positions 25-284 (LWTKCPKCES…ICRMLLQKSA (260 aa)) constitute a CoA carboxyltransferase N-terminal domain. Zn(2+)-binding residues include Cys29, Cys32, Cys48, and Cys51. A C4-type zinc finger spans residues 29 to 51 (CPKCESTLYRAEVRRNLEVCPKC).

The protein belongs to the AccD/PCCB family. Acetyl-CoA carboxylase is a heterohexamer composed of biotin carboxyl carrier protein (AccB), biotin carboxylase (AccC) and two subunits each of ACCase subunit alpha (AccA) and ACCase subunit beta (AccD). Requires Zn(2+) as cofactor.

The protein resides in the cytoplasm. It carries out the reaction N(6)-carboxybiotinyl-L-lysyl-[protein] + acetyl-CoA = N(6)-biotinyl-L-lysyl-[protein] + malonyl-CoA. The protein operates within lipid metabolism; malonyl-CoA biosynthesis; malonyl-CoA from acetyl-CoA: step 1/1. Component of the acetyl coenzyme A carboxylase (ACC) complex. Biotin carboxylase (BC) catalyzes the carboxylation of biotin on its carrier protein (BCCP) and then the CO(2) group is transferred by the transcarboxylase to acetyl-CoA to form malonyl-CoA. This chain is Acetyl-coenzyme A carboxylase carboxyl transferase subunit beta, found in Hydrogenovibrio crunogenus (strain DSM 25203 / XCL-2) (Thiomicrospira crunogena).